The primary structure comprises 511 residues: Signal transduction histidine-protein kinase/phosphatase MprB (511 aa).

At 1–26 the chain is on the cytoplasmic side; it reads MVGFRRGPRAPLRATSSLSLRWRVML. The chain crosses the membrane as a helical span at residues 27 to 47; that stretch reads LAMSMVAMVVVLMSFAVYAVI. The Extracellular segment spans residues 48–163; it reads SAALYSDIDN…PTEAVMTKLR (116 aa). The helical transmembrane segment at 164 to 184 threads the bilayer; sequence AVLLIVGGVGVAVAAVAGGMV. Topologically, residues 185–511 are cytoplasmic; that stretch reads TRAGLRPVGR…SVDSQSARAR (327 aa). Residues 186–238 enclose the HAMP domain; sequence RAGLRPVGRLTEAAERVARTDDLRPIPVFGSDELARLTEAFNLMLRALAESRE. A Histidine kinase domain is found at 246 to 466; it reads DAGHELRTPL…AICMLLPGRP (221 aa). At His249 the chain carries Phosphohistidine; by autocatalysis. The tract at residues 468–511 is disordered; that stretch reads PDSAYPAAPDDKKTEPVDTRGANGANSRGSANVISVDSQSARAR. Positions 476–485 are enriched in basic and acidic residues; that stretch reads PDDKKTEPVD. Over residues 491 to 511 the composition is skewed to polar residues; it reads GANSRGSANVISVDSQSARAR.

Mg(2+) is required as a cofactor. The cofactor is Mn(2+). In terms of processing, autophosphorylated.

Its subcellular location is the cell membrane. It catalyses the reaction ATP + protein L-histidine = ADP + protein N-phospho-L-histidine.. Its function is as follows. Member of the two-component regulatory system MprB/MprA which contributes to maintaining a balance among several systems involved in stress resistance and is required for establishment and maintenance of persistent infection in the host. In response to environmental signals MprB acts both as a membrane-associated protein kinase that undergoes autophosphorylation and subsequently transfers the phosphate to MprA, and a protein phosphatase that dephosphorylates phospho-MprA. This chain is Signal transduction histidine-protein kinase/phosphatase MprB (mprB), found in Mycobacterium ulcerans (strain Agy99).